The following is a 260-amino-acid chain: Adenosylcobinamide-GDP ribazoletransferase (260 aa).

6 helical membrane-spanning segments follow: residues 7-27, 45-65, 117-137, 145-165, 187-207, and 210-230; these read WYFL…TRLP, LMGL…HWLG, AYGV…LASF, WALI…IALY, LLLG…ALAI, and WLIL…GRWF.

This sequence belongs to the CobS family. Requires Mg(2+) as cofactor.

It is found in the cell inner membrane. The catalysed reaction is alpha-ribazole + adenosylcob(III)inamide-GDP = adenosylcob(III)alamin + GMP + H(+). The enzyme catalyses alpha-ribazole 5'-phosphate + adenosylcob(III)inamide-GDP = adenosylcob(III)alamin 5'-phosphate + GMP + H(+). Its pathway is cofactor biosynthesis; adenosylcobalamin biosynthesis; adenosylcobalamin from cob(II)yrinate a,c-diamide: step 7/7. Its function is as follows. Joins adenosylcobinamide-GDP and alpha-ribazole to generate adenosylcobalamin (Ado-cobalamin). Also synthesizes adenosylcobalamin 5'-phosphate from adenosylcobinamide-GDP and alpha-ribazole 5'-phosphate. The chain is Adenosylcobinamide-GDP ribazoletransferase from Synechocystis sp. (strain ATCC 27184 / PCC 6803 / Kazusa).